We begin with the raw amino-acid sequence, 467 residues long: Probable serine hydroxymethyltransferase, cytosolic (467 aa).

Residue K243 is modified to N6-(pyridoxal phosphate)lysine.

Belongs to the SHMT family. In terms of assembly, homotetramer. It depends on pyridoxal 5'-phosphate as a cofactor.

Its subcellular location is the cytoplasm. It carries out the reaction (6R)-5,10-methylene-5,6,7,8-tetrahydrofolate + glycine + H2O = (6S)-5,6,7,8-tetrahydrofolate + L-serine. The protein operates within one-carbon metabolism; tetrahydrofolate interconversion. Functionally, interconversion of serine and glycine. The polypeptide is Probable serine hydroxymethyltransferase, cytosolic (Schizosaccharomyces pombe (strain 972 / ATCC 24843) (Fission yeast)).